A 1237-amino-acid chain; its full sequence is Tyrosine-protein kinase sid-3 (1237 aa).

One can recognise a Protein kinase domain in the interval 107 to 369 (IKLYELIGEG…REDLVAAMFL (263 aa)). Residues 113 to 121 (IGEGSFAVV) and K139 contribute to the ATP site. The active-site Proton acceptor is D230. One can recognise an SH3 domain in the interval 366–426 (AMFLDAVARE…PRSVVFAQTN (61 aa)). Disordered regions lie at residues 683–704 (NQGS…GIQN), 741–802 (PPAP…APVQ), 826–919 (IQPQ…EERR), 940–986 (SNST…SEPI), 999–1018 (SATT…PSPP), and 1134–1156 (QQRQ…SAAS). Composition is skewed to polar residues over residues 749–766 (QPVS…TLQK), 778–791 (KRPT…SNGF), and 847–863 (SAPT…SQAS). Low complexity-rich tracts occupy residues 881–910 (TPIT…TSTT) and 940–961 (SNST…PSTA). Positions 1138 to 1156 (AGSSSRAVPPASASTSAAS) are enriched in low complexity.

The protein belongs to the protein kinase superfamily. Tyr protein kinase family. SYK/ZAP-70 subfamily. As to expression, ubiquitously present in all tissues tested. Expressed in the somatic cells of gut, pharynx, body wall muscle, neurons, skin and excretory canal cells.

Its subcellular location is the cytoplasm. The enzyme catalyses L-tyrosyl-[protein] + ATP = O-phospho-L-tyrosyl-[protein] + ADP + H(+). Functionally, tyrosine-protein kinase which plays a role in RNA-mediated gene silencing by mediating import of double-stranded RNA (dsRNA) into cells. Not required for import of ingested dsRNA into intestinal cells but involved in subsequent export from intestinal cells to internal tissues. This Caenorhabditis elegans protein is Tyrosine-protein kinase sid-3 (sid-3).